Here is a 500-residue protein sequence, read N- to C-terminus: NADH-quinone oxidoreductase subunit N (500 aa).

Helical transmembrane passes span 6–26 (SWIA…IALV), 40–60 (ALTL…ALGG), 69–89 (MVVV…ALMI), 106–125 (GGEF…VMIS), 129–151 (FLVL…ALRR), 164–184 (FVLG…LYGA), 207–227 (LVFG…AVPF), 239–259 (PTAV…AMTI), 276–296 (MLAL…VAQT), 302–322 (LAFS…AGVV), 337–357 (MFYA…ILLL), 380–400 (YAGV…LVGF), 417–437 (SYLV…FYYL), and 464–484 (IVLA…SSLM).

Belongs to the complex I subunit 2 family. As to quaternary structure, NDH-1 is composed of 14 different subunits. Subunits NuoA, H, J, K, L, M, N constitute the membrane sector of the complex.

Its subcellular location is the cell inner membrane. It carries out the reaction a quinone + NADH + 5 H(+)(in) = a quinol + NAD(+) + 4 H(+)(out). Its function is as follows. NDH-1 shuttles electrons from NADH, via FMN and iron-sulfur (Fe-S) centers, to quinones in the respiratory chain. The immediate electron acceptor for the enzyme in this species is believed to be ubiquinone. Couples the redox reaction to proton translocation (for every two electrons transferred, four hydrogen ions are translocated across the cytoplasmic membrane), and thus conserves the redox energy in a proton gradient. This Polaromonas naphthalenivorans (strain CJ2) protein is NADH-quinone oxidoreductase subunit N.